The chain runs to 195 residues: Peptidyl-tRNA hydrolase (195 aa).

TRNA is bound at residue Tyr-17. His-22 (proton acceptor) is an active-site residue. Residues Tyr-68, Asn-70, and Asn-116 each contribute to the tRNA site.

The protein belongs to the PTH family. As to quaternary structure, monomer.

Its subcellular location is the cytoplasm. The catalysed reaction is an N-acyl-L-alpha-aminoacyl-tRNA + H2O = an N-acyl-L-amino acid + a tRNA + H(+). Hydrolyzes ribosome-free peptidyl-tRNAs (with 1 or more amino acids incorporated), which drop off the ribosome during protein synthesis, or as a result of ribosome stalling. In terms of biological role, catalyzes the release of premature peptidyl moieties from peptidyl-tRNA molecules trapped in stalled 50S ribosomal subunits, and thus maintains levels of free tRNAs and 50S ribosomes. The chain is Peptidyl-tRNA hydrolase from Shewanella frigidimarina (strain NCIMB 400).